Here is a 133-residue protein sequence, read N- to C-terminus: Major seminal plasma glycoprotein PSP-I (133 aa).

The N-terminal stretch at 1–24 (MKLGSAIPWALLFSTATLISTGWG) is a signal peptide. Cysteine 30 and cysteine 51 are disulfide-bonded. Positions 30–130 (CGGRLTDDYG…SPYEIIFLRD (101 aa)) constitute a CUB domain. Asparagine 71 is a glycosylation site (N-linked (GlcNAc...) (complex) asparagine). An intrachain disulfide couples cysteine 74 to cysteine 95.

As to quaternary structure, monomer or heterodimer with PSP-II (depending on the type of glycosylation of PSP-I). As to expression, seminal plasma or sperm.

Its subcellular location is the secreted. Its function is as follows. Not yet identified, major porcine seminal plasma protein. Can bind soybean trypsin inhibitor after deglycosylation. The protein is Major seminal plasma glycoprotein PSP-I of Sus scrofa (Pig).